A 2620-amino-acid chain; its full sequence is Ubiquitin carboxyl-terminal hydrolase 24 (2620 aa).

Residues Ser-3–Glu-44 form the UBA domain. Positions Arg-45–His-102 are disordered. The segment covering Ser-58–Phe-95 has biased composition (gly residues). 2 positions are modified to phosphoserine: Ser-63 and Ser-88. Tyr-942 bears the Phosphotyrosine mark. 2 disordered regions span residues Thr-1034–Ser-1054 and Thr-1129–Gln-1151. A compositionally biased stretch (low complexity) spans Leu-1131–Gln-1151. Ser-1141 and Ser-1285 each carry phosphoserine. In terms of domain architecture, USP spans Val-1689 to Val-2042. The Nucleophile role is filled by Cys-1698. Residues Ala-1921–Arg-1945 are disordered. Ser-1943 bears the Phosphoserine mark. His-1970 (proton acceptor) is an active-site residue. Phosphoserine is present on residues Ser-2047, Ser-2077, and Ser-2561. Residues Ala-2063–Asp-2090 form a disordered region. The span at Ser-2069–Pro-2082 shows a compositional bias: low complexity. A Phosphothreonine modification is found at Thr-2565. A disordered region spans residues Glu-2575–Pro-2620. Over residues Ser-2579–Glu-2592 the composition is skewed to low complexity. Residue Ser-2604 is modified to Phosphoserine. Residues Leu-2611–Pro-2620 show a composition bias toward basic and acidic residues.

It belongs to the peptidase C19 family. In terms of assembly, (Microbial infection) Interacts with human cytomegalovirus protein UL38.

It catalyses the reaction Thiol-dependent hydrolysis of ester, thioester, amide, peptide and isopeptide bonds formed by the C-terminal Gly of ubiquitin (a 76-residue protein attached to proteins as an intracellular targeting signal).. Functionally, ubiquitin-specific protease that regulates cell survival in various contexts through modulating the protein stability of some of its substrates including DDB2, MCL1 or TP53. Plays a positive role on ferritinophagy where ferritin is degraded in lysosomes and releases free iron. The protein is Ubiquitin carboxyl-terminal hydrolase 24 (USP24) of Homo sapiens (Human).